The primary structure comprises 1066 residues: Zinc finger and BTB domain-containing protein 21 (1066 aa).

The region spanning 30–96 (CDVLLIVGDQ…IYSSSLFVEK (67 aa)) is the BTB domain. Residues 30-96 (CDVLLIVGDQ…IYSSSLFVEK (67 aa)) form a mediates homodimerization region. Lys40 is covalently cross-linked (Glycyl lysine isopeptide (Lys-Gly) (interchain with G-Cter in SUMO1); alternate). Lys40 participates in a covalent cross-link: Glycyl lysine isopeptide (Lys-Gly) (interchain with G-Cter in SUMO2); alternate. Positions 154 to 177 (SRNEAQGKTVSQNQPDVSHTSRPS) are enriched in polar residues. Residues 154–196 (SRNEAQGKTVSQNQPDVSHTSRPSPSIAVKANTNKPHVPKPIE) are disordered. Residues Lys255, Lys266, Lys273, Lys312, and Lys337 each participate in a glycyl lysine isopeptide (Lys-Gly) (interchain with G-Cter in SUMO2) cross-link. Residues Ser345 and Ser381 each carry the phosphoserine modification. Lys383 is covalently cross-linked (Glycyl lysine isopeptide (Lys-Gly) (interchain with G-Cter in SUMO2)). Basic and acidic residues predominate over residues 388–399 (DCSEKTALDDRP). Disordered regions lie at residues 388 to 442 (DCSE…DPSD), 454 to 485 (TAAA…AKRR), and 498 to 525 (KVNE…ADFP). A phosphoserine mark is found at Ser411 and Ser422. Residue Lys430 forms a Glycyl lysine isopeptide (Lys-Gly) (interchain with G-Cter in SUMO2) linkage. Phosphothreonine is present on Thr431. 3 positions are modified to phosphoserine: Ser434, Ser435, and Ser438. Residues 466 to 478 (LSLKTEDDQKDMS) are compositionally biased toward basic and acidic residues. Glycyl lysine isopeptide (Lys-Gly) (interchain with G-Cter in SUMO2) cross-links involve residues Lys469 and Lys475. 2 C2H2-type zinc fingers span residues 546-569 (FKCK…NMYH) and 575-598 (YACD…QTQH). Ser605 is modified (phosphoserine). Residues Lys617, Lys643, and Lys659 each participate in a glycyl lysine isopeptide (Lys-Gly) (interchain with G-Cter in SUMO2) cross-link. The C2H2-type 3 zinc-finger motif lies at 670–692 (YICTYCGKAYRFLSQFKQHIKMH). Lys702 participates in a covalent cross-link: Glycyl lysine isopeptide (Lys-Gly) (interchain with G-Cter in SUMO2). At Ser714 the chain carries Phosphoserine. The C2H2-type 4; atypical zinc finger occupies 748 to 770 (AVCPYCSLRFFSPELKQEHESKC). Residues Lys763 and Lys785 each participate in a glycyl lysine isopeptide (Lys-Gly) (interchain with G-Cter in SUMO2) cross-link. Residues 775-798 (LTCLECMRTFKSSFSIWRHQVEVH) form a C2H2-type 5 zinc finger. Residues 806-840 (TENFSLPVLDHNGDVTGSSRPQSQPEPNKVNHIVT) form a disordered region. Residues 820–831 (VTGSSRPQSQPE) are compositionally biased toward polar residues. Lys875 participates in a covalent cross-link: Glycyl lysine isopeptide (Lys-Gly) (interchain with G-Cter in SUMO2). A Glycyl lysine isopeptide (Lys-Gly) (interchain with G-Cter in SUMO1); alternate cross-link involves residue Lys879. Lys879 participates in a covalent cross-link: Glycyl lysine isopeptide (Lys-Gly) (interchain with G-Cter in SUMO2); alternate. A disordered region spans residues 879–906 (KEEPVEEAEEEAPEASTAPKEAGPSKEA). The segment covering 882-891 (PVEEAEEEAP) has biased composition (acidic residues). The C2H2-type 6; atypical zinc finger occupies 909–932 (WPCEKCGKMFTVHKQLERHQELLC). A Glycyl lysine isopeptide (Lys-Gly) (interchain with G-Cter in SUMO2) cross-link involves residue Lys935. The segment at 937–959 (FICHVCNKAFRTNFRLWSHFQSH) adopts a C2H2-type 7 zinc-finger fold. The segment at 963–1014 (ASEESAHKESEVCPVPTNSPSPPPLPPPPPLPKIQPLEPDSPTGLSENPTPA) is disordered. A compositionally biased stretch (pro residues) spans 979-995 (TNSPSPPPLPPPPPLPK). Residue Ser1003 is modified to Phosphoserine. The segment at 1043-1065 (FMCKLCHRTFKTAFSLWSHEQTH) adopts a C2H2-type 8 zinc-finger fold.

In terms of assembly, homodimer. Interacts with ZBTB14. As to expression, ubiquitous in fetal and adult tissues.

Its subcellular location is the nucleus. Acts as a transcription repressor. This Homo sapiens (Human) protein is Zinc finger and BTB domain-containing protein 21 (ZBTB21).